The sequence spans 161 residues: N5-carboxyaminoimidazole ribonucleotide mutase (161 aa).

Residues serine 9, aspartate 12, and arginine 39 each coordinate substrate.

Belongs to the AIR carboxylase family. Class I subfamily.

The catalysed reaction is 5-carboxyamino-1-(5-phospho-D-ribosyl)imidazole + H(+) = 5-amino-1-(5-phospho-D-ribosyl)imidazole-4-carboxylate. It participates in purine metabolism; IMP biosynthesis via de novo pathway; 5-amino-1-(5-phospho-D-ribosyl)imidazole-4-carboxylate from 5-amino-1-(5-phospho-D-ribosyl)imidazole (N5-CAIR route): step 2/2. In terms of biological role, catalyzes the conversion of N5-carboxyaminoimidazole ribonucleotide (N5-CAIR) to 4-carboxy-5-aminoimidazole ribonucleotide (CAIR). The sequence is that of N5-carboxyaminoimidazole ribonucleotide mutase from Vibrio parahaemolyticus serotype O3:K6 (strain RIMD 2210633).